Reading from the N-terminus, the 314-residue chain is Lipid A biosynthesis acyltransferase 2 (314 aa).

A helical membrane pass occupies residues 17-37; it reads LSPVYWFTWFVLGMIAGISMF. The HXXXXD motif signature appears at 137–142; that stretch reads HGWSVD.

It belongs to the LpxL/LpxM/LpxP family. LpxM subfamily.

Its subcellular location is the cell inner membrane. The catalysed reaction is an alpha-Kdo-(2-&gt;4)-alpha-Kdo-(2-&gt;6)-(acyl)-lipid IVA + a fatty acyl-[ACP] = an alpha-Kdo-(2-&gt;4)-alpha-Kdo-(2-&gt;6)-lipid A + holo-[ACP]. The protein operates within glycolipid biosynthesis; KDO(2)-lipid A biosynthesis; KDO(2)-lipid A from CMP-3-deoxy-D-manno-octulosonate and lipid IV(A): step 4/4. Its pathway is bacterial outer membrane biogenesis; lipopolysaccharide biosynthesis. In terms of biological role, catalyzes the transfer of an acyl chain from an acyl-[acyl-carrier-protein] (ACP) to a Kdo(2)-(acyl)-lipid IV(A) to form a Kdo(2)-lipid A. The polypeptide is Lipid A biosynthesis acyltransferase 2 (Shigella flexneri).